The chain runs to 185 residues: Elongation factor P (185 aa).

It belongs to the elongation factor P family.

The protein localises to the cytoplasm. Its pathway is protein biosynthesis; polypeptide chain elongation. Functionally, involved in peptide bond synthesis. Stimulates efficient translation and peptide-bond synthesis on native or reconstituted 70S ribosomes in vitro. Probably functions indirectly by altering the affinity of the ribosome for aminoacyl-tRNA, thus increasing their reactivity as acceptors for peptidyl transferase. The polypeptide is Elongation factor P (Metamycoplasma arthritidis (strain 158L3-1) (Mycoplasma arthritidis)).